Reading from the N-terminus, the 725-residue chain is Polyribonucleotide nucleotidyltransferase (725 aa).

Residues D487 and D493 each contribute to the Mg(2+) site. The KH domain occupies 554-613 (PRIETMQIPTDKIREVIGTGGKVIREIVEKTGAKIDIQDTGVVKIASSDGKAIKAAYNWI). The S1 motif domain maps to 623–691 (GMIYDGTVVK…ERGKIRLSMK (69 aa)). A disordered region spans residues 699 to 725 (EDLTEKLKAEREADRNRERQARQSAGE). Basic and acidic residues predominate over residues 701–719 (LTEKLKAEREADRNRERQA).

Belongs to the polyribonucleotide nucleotidyltransferase family. Mg(2+) serves as cofactor.

Its subcellular location is the cytoplasm. The enzyme catalyses RNA(n+1) + phosphate = RNA(n) + a ribonucleoside 5'-diphosphate. Its function is as follows. Involved in mRNA degradation. Catalyzes the phosphorolysis of single-stranded polyribonucleotides processively in the 3'- to 5'-direction. The protein is Polyribonucleotide nucleotidyltransferase of Methylobacterium sp. (strain 4-46).